A 228-amino-acid polypeptide reads, in one-letter code: 7-cyano-7-deazaguanine synthase (228 aa).

7–17 (LSGGLDSSTAL) provides a ligand contact to ATP. Cysteine 190, cysteine 202, cysteine 205, and cysteine 208 together coordinate Zn(2+).

The protein belongs to the QueC family. It depends on Zn(2+) as a cofactor.

The catalysed reaction is 7-carboxy-7-deazaguanine + NH4(+) + ATP = 7-cyano-7-deazaguanine + ADP + phosphate + H2O + H(+). It functions in the pathway purine metabolism; 7-cyano-7-deazaguanine biosynthesis. In terms of biological role, catalyzes the ATP-dependent conversion of 7-carboxy-7-deazaguanine (CDG) to 7-cyano-7-deazaguanine (preQ(0)). The protein is 7-cyano-7-deazaguanine synthase of Acaryochloris marina (strain MBIC 11017).